A 286-amino-acid chain; its full sequence is 33 kDa chaperonin (286 aa).

2 cysteine pairs are disulfide-bonded: Cys225–Cys227 and Cys258–Cys261.

It belongs to the HSP33 family. Post-translationally, under oxidizing conditions two disulfide bonds are formed involving the reactive cysteines. Under reducing conditions zinc is bound to the reactive cysteines and the protein is inactive.

The protein localises to the cytoplasm. In terms of biological role, redox regulated molecular chaperone. Protects both thermally unfolding and oxidatively damaged proteins from irreversible aggregation. Plays an important role in the bacterial defense system toward oxidative stress. This Shewanella baltica (strain OS223) protein is 33 kDa chaperonin.